We begin with the raw amino-acid sequence, 349 residues long: GATA zinc finger domain-containing protein 24 (349 aa).

2 stretches are compositionally biased toward low complexity: residues 95–169 (NINR…VNKN) and 177–195 (NKSCKNNNINNNNNNNNNS). Disordered stretches follow at residues 95–227 (NINR…PVIK) and 250–294 (DYDY…KPVQ). Positions 196-212 (ENKEKNNINNNNEKENN) are enriched in basic and acidic residues. Residues 257–272 (SNESSSPTLSASTLSS) are compositionally biased toward low complexity. The segment covering 278 to 289 (KVLKRGRGRPSK) has biased composition (basic residues). Residues 295–323 (CFSCFRSNTPEWRKGKDKDGNVIDLCNAC) form a GATA-type zinc finger.

This is GATA zinc finger domain-containing protein 24 (gtaX) from Dictyostelium discoideum (Social amoeba).